Consider the following 283-residue polypeptide: Bifunctional protein FolD 1 (283 aa).

Residues 166-168 (GRS) and Ile-232 each bind NADP(+).

This sequence belongs to the tetrahydrofolate dehydrogenase/cyclohydrolase family. Homodimer.

The enzyme catalyses (6R)-5,10-methylene-5,6,7,8-tetrahydrofolate + NADP(+) = (6R)-5,10-methenyltetrahydrofolate + NADPH. It carries out the reaction (6R)-5,10-methenyltetrahydrofolate + H2O = (6R)-10-formyltetrahydrofolate + H(+). The protein operates within one-carbon metabolism; tetrahydrofolate interconversion. In terms of biological role, catalyzes the oxidation of 5,10-methylenetetrahydrofolate to 5,10-methenyltetrahydrofolate and then the hydrolysis of 5,10-methenyltetrahydrofolate to 10-formyltetrahydrofolate. The chain is Bifunctional protein FolD 1 from Lactobacillus johnsonii (strain CNCM I-12250 / La1 / NCC 533).